A 145-amino-acid chain; its full sequence is Venom protein 30.1 (145 aa).

The N-terminal stretch at 1 to 18 (MIIVKLFTCLLMVSSVLT) is a signal peptide.

In terms of processing, contains 5 disulfide bonds. Expressed by the venom gland.

The protein localises to the secreted. This is Venom protein 30.1 from Lychas mucronatus (Chinese swimming scorpion).